The primary structure comprises 332 residues: MSDAKKKAAAELAAKNLAQLQKIDIAASKILDKMPFAAIYHIDAARKEWNQSNCEGTFFVYQRADRPYFSFLIANRNDPSDFIEPLTLNHILRHDGNFIYFYKDLASIQALWFHQIDDAQKIYNLLQKLVNRLKGSTTEQARAAKAASEAPQASVPAPTQAPAAPAQAPQMAPQAPPKVDLLQLIKSAQNPPQKSAATIEQMPPMLQKLMLKEPGAAMSADELEKDLIKSAKPHRNHLLQEFTNSTSAISLAAVSTKPLHGSEGDVESDIAEGEILEPLDASFVVGSGEQTPVLNKEQFISAIAHLMQTDDEFVSQIHQAYVSALNRRLNID.

The span at 141–173 shows a compositional bias: low complexity; that stretch reads ARAAKAASEAPQASVPAPTQAPAAPAQAPQMAP. Residues 141 to 175 form a disordered region; the sequence is ARAAKAASEAPQASVPAPTQAPAAPAQAPQMAPQA.

Belongs to the DCP1 family. May be a component of the decapping complex composed of dcap-1 and dcap-2. In terms of tissue distribution, expressed in neurons including touch receptor neurons and motor neurons.

Its subcellular location is the cytoplasm. The protein resides in the cytoplasmic granule. Component of the decapping complex necessary for the degradation of mRNAs, both in normal mRNA turnover and in nonsense-mediated mRNA decay. In contrast to orthologs, does not possess decapping activity and does not remove the 7-methyl guanine cap structure from mRNA molecules. In the nervous system, negatively regulates the expression of insulin-like peptide ins-7, which in turn promotes longevity. This may in part be through promoting the activity of daf-16 in distal tissues. Required for the developmental axon guidance and regrowth of PLM touch receptor neurons. In ADL sensory neurons, plays a role in ciliary shape formation. Acts in neurons to promote larval survival at high temperatures by negatively regulating lin-14 expression. The protein is mRNA-decapping enzyme 1 of Caenorhabditis elegans.